Consider the following 1715-residue polypeptide: Sodium channel protein type 4 subunit alpha B (1715 aa).

The Cytoplasmic segment spans residues 1 to 126; the sequence is MGTLLPPVGS…IFAIKILVHS (126 aa). The I repeat unit spans residues 108 to 431; sequence LLSPFNSMRI…VVAMAYAEQN (324 aa). The chain crosses the membrane as a helical span at residues 127 to 145; it reads LFSLFIMATILTNCVFMTL. Over 146–152 the chain is Extracellular; sequence SDPPAWS. The chain crosses the membrane as a helical span at residues 153–173; the sequence is KTVEYVFTFIYTFEATIKVVS. The Cytoplasmic segment spans residues 174 to 187; it reads RGFCVGQFTFLKDP. Residues 188–205 form a helical membrane-spanning segment; sequence WNWLDFMVISMAYLTELV. At 206–211 the chain is on the extracellular side; the sequence is DLGNVS. N-linked (GlcNAc...) asparagine glycosylation is present at N209. Residues 212–228 form a helical membrane-spanning segment; the sequence is VLRTFRVLRALKTITVI. Over 229–247 the chain is Cytoplasmic; it reads PGLKTIVGALIQSVKKLAD. The helical transmembrane segment at 248–267 threads the bilayer; it reads AMVLTVFCLSVFALIGLQLF. The Extracellular portion of the chain corresponds to 268–368; that stretch reads MGNLRQKCVL…PNYGYTSYDS (101 aa). A disulfide bridge connects residues C275 and C337. N-linked (GlcNAc...) asparagine glycosylation is found at N284, N304, and N339. A disulfide bridge links C346 with C352. Residues 369 to 393 constitute an intramembrane region (pore-forming); the sequence is FGWAFLALFRLMTQDFWENLFQLTL. Residues 394–400 are Extracellular-facing; that stretch reads RAAGKTY. Residues 401–421 form a helical membrane-spanning segment; that stretch reads MIFFVVVIFLGSFYLINLILA. The Cytoplasmic portion of the chain corresponds to 422–515; it reads VVAMAYAEQN…RCLSAIVMDP (94 aa). One copy of the II repeat lies at 497-768; that stretch reads CCSCWRHLKR…QIAVNRIKRA (272 aa). The helical transmembrane segment at 516–534 threads the bilayer; that stretch reads FVDLGITICIILNTIFMAM. The Extracellular portion of the chain corresponds to 535–545; the sequence is EHYPMSADFEE. Residues 546-565 traverse the membrane as a helical segment; it reads LLSVGNLVFTGIFTCEMVLK. Residues 566–579 lie on the Cytoplasmic side of the membrane; the sequence is ILAMDPYFYFQVGW. A helical membrane pass occupies residues 580-599; that stretch reads NIFDSIIVTMSLVELGLANV. Topologically, residues 600–601 are extracellular; the sequence is QG. A helical membrane pass occupies residues 602–619; sequence LSVLRSFRLMRVFKLAKS. Residues 620 to 635 lie on the Cytoplasmic side of the membrane; the sequence is WPTLNMLIKIIGNSVG. The chain crosses the membrane as a helical span at residues 636-654; it reads ALGNLTLVLAIIVFIFAVV. At 655–683 the chain is on the extracellular side; sequence GMQLFGKNYKDCVCRISEDCKLPRWHMND. C668 and C674 are oxidised to a cystine. An intramembrane region (pore-forming) is located at residues 684–704; the sequence is FFHAFLIIFRVLCGEWIDTMW. Residues 705–715 lie on the Extracellular side of the membrane; sequence DCMEVSGQTMC. C706 and C715 are oxidised to a cystine. A helical transmembrane segment spans residues 716–734; that stretch reads LIVYMMVLVIGNLVVLNLF. At 735–915 the chain is on the cytoplasmic side; the sequence is LALLLSSFSG…ACFIIVENNY (181 aa). The disordered stretch occupies residues 824–865; the sequence is EAESDSEDSDDDDVDEDKHSRCDESSFCSTVQDPEVKENEAD. Acidic residues predominate over residues 825–838; it reads AESDSEDSDDDDVD. One copy of the III repeat lies at 896-1211; the sequence is KGKVWCNIRR…KKYYNAMKKL (316 aa). Residues 916 to 933 traverse the membrane as a helical segment; the sequence is FESFIVFMILLSSGALAF. Topologically, residues 934–946 are extracellular; that stretch reads EDIYLEKHQLIKT. The helical transmembrane segment at 947–965 threads the bilayer; the sequence is ILEYADKVFTYVFVVEMVL. Residues 966–979 are Cytoplasmic-facing; the sequence is KWFAYGFKSYFSNA. Residues 980-998 form a helical membrane-spanning segment; that stretch reads WCWLDFLIVDVSLVSLTAN. The Extracellular segment spans residues 999 to 1006; the sequence is ILGYSELG. A helical membrane pass occupies residues 1007 to 1025; sequence AIKSLRTLRALRPLRALSR. At 1026–1042 the chain is on the cytoplasmic side; it reads FEGMRVVVNALVGAVPS. The chain crosses the membrane as a helical span at residues 1043–1062; it reads IFNVLLVCLIFWLIFSIMGV. Over 1063 to 1115 the chain is Extracellular; the sequence is NLFAGKFSYCFNETSQEQFDKKIVNNKTECIALIEANFTEVRWKNLKVNYDNV. A disulfide bond links C1072 and C1092. 2 N-linked (GlcNAc...) asparagine glycosylation sites follow: N1074 and N1088. Positions 1116–1137 form an intramembrane region, pore-forming; that stretch reads GIGYLSLLQVATFKGWMEIMYA. Residues 1138-1154 are Extracellular-facing; that stretch reads AVDSRDVESQPIYEVNI. A helical membrane pass occupies residues 1155 to 1176; the sequence is YMYLYFVIFIIFGSFFTLNLFI. Topologically, residues 1177–1239 are cytoplasmic; the sequence is GVIIDNFNQQ…LVFDLVTKQI (63 aa). The segment at 1195–1197 is important for rapid channel inactivation; it reads IFM. The IV repeat unit spans residues 1220–1517; the sequence is VPRPENALQG…WEKFDPDATQ (298 aa). The chain crosses the membrane as a helical span at residues 1240–1257; that stretch reads FDVFIMVLICLNMVTMMV. Residues 1258–1268 lie on the Extracellular side of the membrane; it reads ETDEQTKEKED. The helical transmembrane segment at 1269–1287 threads the bilayer; the sequence is ILYWINVIFIVIFTTECIL. The Cytoplasmic portion of the chain corresponds to 1288–1299; the sequence is KTIALRRHYFSI. Residues 1300 to 1317 traverse the membrane as a helical segment; it reads GWNVFDFVVVILSILGLL. The Extracellular segment spans residues 1318-1330; it reads LADIIEKYFVSPT. Residues 1331–1347 traverse the membrane as a helical segment; it reads LFRVIRLARIGRVLRLI. Residues 1348 to 1366 are Cytoplasmic-facing; sequence RGAKGIRTLLFALMMSLPA. The chain crosses the membrane as a helical span at residues 1367 to 1384; it reads LFNIGLLLFLIMFIFSIF. At 1385–1406 the chain is on the extracellular side; sequence GMSNFAYVKKEAMIDDMFNFET. An intramembrane region (pore-forming) is located at residues 1407–1429; the sequence is FGNSMICLFMITTSAGWDGLLSP. The Extracellular portion of the chain corresponds to 1430–1458; sequence IMNKPPDCDPDLENPGTTVRGNCGSPAIG. C1437 and C1452 are disulfide-bonded. A helical membrane pass occupies residues 1459–1481; sequence IVFFSTYIIMSFLVVVNMYIAII. At 1482 to 1715 the chain is on the cytoplasmic side; that stretch reads LENFNVATEE…LGTSERESLV (234 aa). The IQ domain occupies 1611–1640; that stretch reads EEVAARVIQRAYRKYLLQRTVRLASFTYRE.

It belongs to the sodium channel (TC 1.A.1.10) family. Nav1.4/SCN4A subfamily. As to quaternary structure, voltage-gated sodium (Nav) channels consist of an ion-conducting alpha subunit which is functional on its own associated with regulatory beta subunits.

It localises to the cell membrane. It catalyses the reaction Na(+)(in) = Na(+)(out). In terms of biological role, pore-forming subunit of a voltage-gated sodium (Nav) channel that directly mediates the depolarizing phase of action potentials in excitable membranes. Navs, also called VGSCs (voltage-gated sodium channels) or VDSCs (voltage-dependent sodium channels), operate by switching between closed and open conformations depending on the voltage difference across the membrane. In the open conformation they allow Na(+) ions to selectively pass through the pore, along their electrochemical gradient. The influx of Na+ ions provokes membrane depolarization, initiating the propagation of electrical signals throughout cells and tissues. This Tetraodon nigroviridis (Spotted green pufferfish) protein is Sodium channel protein type 4 subunit alpha B (scn4ab).